The primary structure comprises 333 residues: uncharacterized protein (333 aa).

This sequence belongs to the proline racemase family.

This is an uncharacterized protein from Vibrio parahaemolyticus serotype O3:K6 (strain RIMD 2210633).